The primary structure comprises 361 residues: Peptide chain release factor 1 (361 aa).

The residue at position 237 (Gln-237) is an N5-methylglutamine.

Belongs to the prokaryotic/mitochondrial release factor family. Methylated by PrmC. Methylation increases the termination efficiency of RF1.

It localises to the cytoplasm. In terms of biological role, peptide chain release factor 1 directs the termination of translation in response to the peptide chain termination codons UAG and UAA. This is Peptide chain release factor 1 from Thioalkalivibrio sulfidiphilus (strain HL-EbGR7).